The chain runs to 349 residues: Biotin synthase (349 aa).

A Radical SAM core domain is found at 60-287 (GDVELATLLS…KARVRLSAGR (228 aa)). [4Fe-4S] cluster contacts are provided by Cys-75, Cys-79, and Cys-82. Cys-119, Cys-150, Cys-210, and Arg-282 together coordinate [2Fe-2S] cluster.

It belongs to the radical SAM superfamily. Biotin synthase family. As to quaternary structure, homodimer. The cofactor is [4Fe-4S] cluster. It depends on [2Fe-2S] cluster as a cofactor.

It carries out the reaction (4R,5S)-dethiobiotin + (sulfur carrier)-SH + 2 reduced [2Fe-2S]-[ferredoxin] + 2 S-adenosyl-L-methionine = (sulfur carrier)-H + biotin + 2 5'-deoxyadenosine + 2 L-methionine + 2 oxidized [2Fe-2S]-[ferredoxin]. Its pathway is cofactor biosynthesis; biotin biosynthesis; biotin from 7,8-diaminononanoate: step 2/2. Catalyzes the conversion of dethiobiotin (DTB) to biotin by the insertion of a sulfur atom into dethiobiotin via a radical-based mechanism. This Albidiferax ferrireducens (strain ATCC BAA-621 / DSM 15236 / T118) (Rhodoferax ferrireducens) protein is Biotin synthase.